The chain runs to 324 residues: Olfactory receptor 52N5 (324 aa).

Over 1–33 (MPLFNSLCWFPTIHVTPPSFILNGIPGLERVHV) the chain is Extracellular. The helical transmembrane segment at 34-54 (WISLPLCTMYIIFLVGNLGLV) threads the bilayer. Residues 55–62 (YLIYYEES) lie on the Cytoplasmic side of the membrane. The helical transmembrane segment at 63 to 84 (LHHPMYFFFGHALSLIDLLTCT) threads the bilayer. The Extracellular portion of the chain corresponds to 85–108 (TTLPNALCIFWFSLKEINFNACLA). The cysteines at positions 106 and 198 are disulfide-linked. The chain crosses the membrane as a helical span at residues 109 to 129 (QMFFVHGFTGVESGVLMLMAL). The Cytoplasmic portion of the chain corresponds to 130 to 148 (DRYVAICYPLRYATTLTNP). The chain crosses the membrane as a helical span at residues 149–169 (IIAKAELATFLRGVLLMIPFP). Residues 170–205 (FLVKRLPFCQSNIISHTYCDHMSVVKLSCASIKVNV) lie on the Extracellular side of the membrane. Residues 206-226 (IYGLMVALLIGVFDICCISLS) form a helical membrane-spanning segment. Residues 227 to 246 (YTLILKAAISLSSSDARQKA) are Cytoplasmic-facing. A helical membrane pass occupies residues 247-267 (FSTCTAHISAIIITYVPAFFT). The Extracellular portion of the chain corresponds to 268–283 (FFAHRFGGHTIPPSLH). Residues 284 to 304 (IIVANLYLLLPPTLNPIVYGV) traverse the membrane as a helical segment. Topologically, residues 305 to 324 (KTKQIRKSVIKFFQGDKGAG) are cytoplasmic.

It belongs to the G-protein coupled receptor 1 family.

The protein resides in the cell membrane. Its function is as follows. Odorant receptor. This Homo sapiens (Human) protein is Olfactory receptor 52N5 (OR52N5).